Consider the following 191-residue polypeptide: Protein GrpE (191 aa).

Residues 1-49 (MSEEKQTAEQVEAAEQEEVTEQAEQAASQEQHEETAGQEEALQHQIDEL) are disordered. Positions 12 to 21 (EAAEQEEVTE) are enriched in acidic residues. Residues 30–49 (EQHEETAGQEEALQHQIDEL) show a composition bias toward basic and acidic residues.

This sequence belongs to the GrpE family. Homodimer.

The protein localises to the cytoplasm. In terms of biological role, participates actively in the response to hyperosmotic and heat shock by preventing the aggregation of stress-denatured proteins, in association with DnaK and GrpE. It is the nucleotide exchange factor for DnaK and may function as a thermosensor. Unfolded proteins bind initially to DnaJ; upon interaction with the DnaJ-bound protein, DnaK hydrolyzes its bound ATP, resulting in the formation of a stable complex. GrpE releases ADP from DnaK; ATP binding to DnaK triggers the release of the substrate protein, thus completing the reaction cycle. Several rounds of ATP-dependent interactions between DnaJ, DnaK and GrpE are required for fully efficient folding. In Bacillus velezensis (strain DSM 23117 / BGSC 10A6 / LMG 26770 / FZB42) (Bacillus amyloliquefaciens subsp. plantarum), this protein is Protein GrpE.